Reading from the N-terminus, the 190-residue chain is CASP-like protein 2U1 (190 aa).

Topologically, residues 1–16 (MAFTSLLGSDAERKVA) are cytoplasmic. A helical membrane pass occupies residues 17–37 (VAEVALRAVLCGLGALAAALV). Topologically, residues 38–59 (ATDTQTRTFFSLQKKATYTDMK) are extracellular. Residues 60–80 (AMVLLVAAAAAAAGYSLLQAA) traverse the membrane as a helical segment. Residues 81-100 (RCCCCVALLRTSIRPRARLL) lie on the Cytoplasmic side of the membrane. The helical transmembrane segment at 101 to 121 (LAWCVFACDQALAYALLAAVV) threads the bilayer. Residues 122–152 (AALQASVVAKQGLPQLQWMAICALYGAFCRQ) are Extracellular-facing. Residues 153–173 (AGAGVACAVAAAVDAALLAFL) form a helical membrane-spanning segment. The Cytoplasmic portion of the chain corresponds to 174-190 (SAFNLFRLYGAKATTTT).

Belongs to the Casparian strip membrane proteins (CASP) family. Homodimer and heterodimers.

Its subcellular location is the cell membrane. The protein is CASP-like protein 2U1 of Zea mays (Maize).